The following is a 114-amino-acid chain: uncharacterized protein (114 aa).

A helical membrane pass occupies residues 13–30; that stretch reads LYISAAGIASIYVVKTIV.

The protein resides in the mitochondrion outer membrane. This is an uncharacterized protein from Saccharomyces cerevisiae (strain ATCC 204508 / S288c) (Baker's yeast).